A 614-amino-acid chain; its full sequence is Zinc finger protein ztf-7 (614 aa).

Over residues 1–10 (MSTSGSGGGN) the composition is skewed to gly residues. The disordered stretch occupies residues 1-160 (MSTSGSGGGN…SRPKKPEKMS (160 aa)). Polar residues predominate over residues 18–41 (NVASSPNANPKKNADTESSGGSKN). The span at 54-69 (GSNSRNGSRTNSVSNS) shows a compositional bias: low complexity. Residues 74 to 83 (NRKDWTDRKS) are compositionally biased toward basic and acidic residues. The segment covering 132–150 (DYSDEYELDEPFSDSDDED) has biased composition (acidic residues). 2 consecutive C2H2-type zinc fingers follow at residues 356–380 (NECIYCEKIFPDRNTLMDHMRKRNH) and 447–470 (VVCLLCDASEDNAQSLLEHMKTTH).

This sequence belongs to the ZNF277 family. In terms of assembly, interacts with rps-2.

The protein localises to the cytoplasm. Probable transcription factor. Limits the ability to tolerate cold environment or cold-warm stress. In complex with rps-2, mediates the cold-warm shock response by promoting translocation of components of the RNA exosome from the nucleolus to nucleoplasm. This is Zinc finger protein ztf-7 from Caenorhabditis elegans.